Consider the following 318-residue polypeptide: Coproporphyrin III ferrochelatase (318 aa).

The Fe(2+) site is built by H186 and E268.

This sequence belongs to the ferrochelatase family.

Its subcellular location is the cytoplasm. It carries out the reaction Fe-coproporphyrin III + 2 H(+) = coproporphyrin III + Fe(2+). It functions in the pathway porphyrin-containing compound metabolism; protoheme biosynthesis. Its function is as follows. Involved in coproporphyrin-dependent heme b biosynthesis. Catalyzes the insertion of ferrous iron into coproporphyrin III to form Fe-coproporphyrin III. The polypeptide is Coproporphyrin III ferrochelatase (Lactococcus lactis subsp. cremoris (strain SK11)).